The following is a 125-amino-acid chain: Transposase for transposon Tn554 (125 aa).

One of three proteins encoded by transposon Tn554 required for its transposition. The sequence is that of Transposase for transposon Tn554 (tnpC1) from Staphylococcus aureus (strain Mu50 / ATCC 700699).